The chain runs to 275 residues: Tryptophan synthase alpha chain (275 aa).

Residues Glu60 and Asp71 each act as proton acceptor in the active site.

It belongs to the TrpA family. Tetramer of two alpha and two beta chains.

It catalyses the reaction (1S,2R)-1-C-(indol-3-yl)glycerol 3-phosphate + L-serine = D-glyceraldehyde 3-phosphate + L-tryptophan + H2O. It participates in amino-acid biosynthesis; L-tryptophan biosynthesis; L-tryptophan from chorismate: step 5/5. In terms of biological role, the alpha subunit is responsible for the aldol cleavage of indoleglycerol phosphate to indole and glyceraldehyde 3-phosphate. The polypeptide is Tryptophan synthase alpha chain (Prochlorococcus marinus (strain MIT 9313)).